The chain runs to 298 residues: N-acetylmuramic acid 6-phosphate etherase (298 aa).

In terms of domain architecture, SIS spans 54 to 217 (CISAIKNHGR…STVTMIKLGK (164 aa)). Glu82 serves as the catalytic Proton donor. The active site involves Glu113.

It belongs to the GCKR-like family. MurNAc-6-P etherase subfamily. As to quaternary structure, homodimer.

It carries out the reaction N-acetyl-D-muramate 6-phosphate + H2O = N-acetyl-D-glucosamine 6-phosphate + (R)-lactate. It functions in the pathway amino-sugar metabolism; N-acetylmuramate degradation. Functionally, specifically catalyzes the cleavage of the D-lactyl ether substituent of MurNAc 6-phosphate, producing GlcNAc 6-phosphate and D-lactate. This is N-acetylmuramic acid 6-phosphate etherase from Petrotoga mobilis (strain DSM 10674 / SJ95).